A 351-amino-acid polypeptide reads, in one-letter code: Tropomodulin-2 (351 aa).

Position 25 is a phosphoserine (Ser25).

This sequence belongs to the tropomodulin family. As to quaternary structure, binds to the N-terminus of tropomyosin and to actin. As to expression, neuronal-tissue specific.

Its subcellular location is the cytoplasm. It localises to the cytoskeleton. Blocks the elongation and depolymerization of the actin filaments at the pointed end. The Tmod/TM complex contributes to the formation of the short actin protofilament, which in turn defines the geometry of the membrane skeleton. The polypeptide is Tropomodulin-2 (Tmod2) (Mus musculus (Mouse)).